A 116-amino-acid chain; its full sequence is T-cell leukemia/lymphoma protein 1A (116 aa).

It belongs to the TCL1 family. Homodimer. Interacts with AKT1, AKT2 and AKT3 (via PH domain). Interacts with PNPT1; the interaction has no effect on PNPT1 exonuclease activity.

It localises to the cytoplasm. The protein localises to the nucleus. It is found in the microsome. Its subcellular location is the endoplasmic reticulum. Enhances the phosphorylation and activation of AKT1 and AKT2. Enhances cell proliferation, stabilizes mitochondrial membrane potential and promotes cell survival. In Mus musculus (Mouse), this protein is T-cell leukemia/lymphoma protein 1A (Tcl1a).